Consider the following 697-residue polypeptide: Putative cryptochrome DASH (697 aa).

The region spanning 5–164 (KLLVYLLRRD…GFKLWHDEKY (160 aa)) is the Photolyase/cryptochrome alpha/beta domain. Disordered stretches follow at residues 170–215 (DNGL…FPSW) and 554–697 (FSVT…PPHI). Basic and acidic residues predominate over residues 188-198 (KTQEPLRERPR). A compositionally biased stretch (basic residues) spans 560 to 569 (RGNRRPYRWR). Residues 578–590 (GRGGRGGGTGNTS) show a composition bias toward gly residues. Low complexity-rich tracts occupy residues 659-675 (QQQQ…YAHQ) and 683-697 (RQQQ…PPHI).

Belongs to the DNA photolyase class-1 family. The cofactor is FAD. It depends on (6R)-5,10-methylene-5,6,7,8-tetrahydrofolate as a cofactor.

Its function is as follows. May have a photoreceptor function. The polypeptide is Putative cryptochrome DASH (Gibberella zeae (strain ATCC MYA-4620 / CBS 123657 / FGSC 9075 / NRRL 31084 / PH-1) (Wheat head blight fungus)).